A 108-amino-acid polypeptide reads, in one-letter code: Nucleoid-associated protein Bcen_6253 (108 aa).

Positions 85–95 (ATSQEKMSGMT) are enriched in polar residues. The segment at 85 to 108 (ATSQEKMSGMTSGLPLPPGFKLPF) is disordered. Over residues 99–108 (PLPPGFKLPF) the composition is skewed to pro residues.

It belongs to the YbaB/EbfC family. As to quaternary structure, homodimer.

Its subcellular location is the cytoplasm. The protein localises to the nucleoid. Functionally, binds to DNA and alters its conformation. May be involved in regulation of gene expression, nucleoid organization and DNA protection. This is Nucleoid-associated protein Bcen_6253 from Burkholderia orbicola (strain AU 1054).